Reading from the N-terminus, the 157-residue chain is 2-C-methyl-D-erythritol 2,4-cyclodiphosphate synthase (157 aa).

Residues Asp8 and His10 each contribute to the a divalent metal cation site. Residues 8-10 (DVH) and 34-35 (HS) each bind 4-CDP-2-C-methyl-D-erythritol 2-phosphate. His42 lines the a divalent metal cation pocket. 4-CDP-2-C-methyl-D-erythritol 2-phosphate contacts are provided by residues 56-58 (DIG), 61-65 (FPDSD), 132-135 (TTTE), Phe139, and Arg142.

Belongs to the IspF family. Homotrimer. A divalent metal cation is required as a cofactor.

It catalyses the reaction 4-CDP-2-C-methyl-D-erythritol 2-phosphate = 2-C-methyl-D-erythritol 2,4-cyclic diphosphate + CMP. It participates in isoprenoid biosynthesis; isopentenyl diphosphate biosynthesis via DXP pathway; isopentenyl diphosphate from 1-deoxy-D-xylulose 5-phosphate: step 4/6. Functionally, involved in the biosynthesis of isopentenyl diphosphate (IPP) and dimethylallyl diphosphate (DMAPP), two major building blocks of isoprenoid compounds. Catalyzes the conversion of 4-diphosphocytidyl-2-C-methyl-D-erythritol 2-phosphate (CDP-ME2P) to 2-C-methyl-D-erythritol 2,4-cyclodiphosphate (ME-CPP) with a corresponding release of cytidine 5-monophosphate (CMP). The protein is 2-C-methyl-D-erythritol 2,4-cyclodiphosphate synthase of Syntrophomonas wolfei subsp. wolfei (strain DSM 2245B / Goettingen).